A 341-amino-acid chain; its full sequence is Putative amino-acid ABC transporter-binding protein YhdW (341 aa).

The signal sequence occupies residues 1-19 (MKKMMIATLAAASVLLAVA).

The protein belongs to the bacterial solute-binding protein 3 family.

It is found in the periplasm. Its function is as follows. Probably part of the binding-protein-dependent transport system YdhWXYZ for an amino acid. This Escherichia coli (strain K12) protein is Putative amino-acid ABC transporter-binding protein YhdW (yhdW).